The primary structure comprises 1137 residues: Bone sialoprotein-binding protein (1137 aa).

The N-terminal stretch at 1–52 (MINRDNKKAITKKGMISNRLNKFSIRKYTVGTASILVGTTLIFGLGNQEAKA) is a signal peptide. The interval 53–601 (AENTSTENAK…GDGTVKPEEK (549 aa)) is ligand binding A region. Disordered stretches follow at residues 54-249 (ENTS…TAPT) and 675-697 (LPTK…VTVK). Residues 61 to 75 (AKQDEASASDNKEVV) are compositionally biased toward basic and acidic residues. Residues 77–89 (ETENNSTQKNDLT) are compositionally biased toward polar residues. Basic and acidic residues predominate over residues 92 to 106 (IKKETNTDSHQEAKE). Over residues 109-126 (TTSSTQQQQNNATTSTET) the composition is skewed to low complexity. Basic and acidic residues predominate over residues 130–145 (NIEKENVKPSTDKTAT). A compositionally biased stretch (polar residues) spans 158–207 (PNNTNNDVTTKPSTSEIQTTPTTPQESTNIENSQPQPTPSKVDNQVTDAT). Over residues 216-241 (SKEELKNNPEKLKELVRNDSNTDRST) the composition is skewed to basic and acidic residues. CNA-B domains follow at residues 602–714 (LYKI…YKEP), 715–824 (KYNL…YKTP), and 825–935 (KYSL…EEDT). The tract at residues 896-1112 (TQTGTNTTED…TGSENNGSNN (217 aa)) is disordered. Acidic residues-rich tracts occupy residues 903 to 913 (TEDDKDADGGE) and 930 to 1076 (YFEE…DSDS). The short motif at 1100–1104 (LPETG) is the LPXTG sorting signal element. Thr-1103 carries the post-translational modification Pentaglycyl murein peptidoglycan amidated threonine. Residues 1104 to 1137 (GSENNGSNNATLFGGLFAALGSLLLFGRRKKQNK) constitute a propeptide, removed by sortase.

Belongs to the serine-aspartate repeat-containing protein (SDr) family.

Its subcellular location is the secreted. It localises to the cell wall. In terms of biological role, specifically interacts with bone sialoprotein (BSP), a glycoprotein of bone and dentin extracellular matrix. Could contribute to staphylococcal osteomyelitis and arthritis. In Staphylococcus aureus (strain MRSA252), this protein is Bone sialoprotein-binding protein (bbp).